Consider the following 381-residue polypeptide: Alkanesulfonate monooxygenase (381 aa).

The protein belongs to the SsuD family. In terms of assembly, homotetramer.

The catalysed reaction is an alkanesulfonate + FMNH2 + O2 = an aldehyde + FMN + sulfite + H2O + 2 H(+). In terms of biological role, catalyzes the desulfonation of aliphatic sulfonates. The chain is Alkanesulfonate monooxygenase from Escherichia coli O17:K52:H18 (strain UMN026 / ExPEC).